The sequence spans 456 residues: tRNA-2-methylthio-N(6)-dimethylallyladenosine synthase (456 aa).

The 116-residue stretch at Met-1–Gln-116 folds into the MTTase N-terminal domain. The [4Fe-4S] cluster site is built by Cys-10, Cys-46, Cys-79, Cys-162, Cys-166, and Cys-169. The region spanning Ser-148 to Lys-384 is the Radical SAM core domain. One can recognise a TRAM domain in the interval Arg-387–Gln-452.

The protein belongs to the methylthiotransferase family. MiaB subfamily. Monomer. Requires [4Fe-4S] cluster as cofactor.

Its subcellular location is the cytoplasm. It catalyses the reaction N(6)-dimethylallyladenosine(37) in tRNA + (sulfur carrier)-SH + AH2 + 2 S-adenosyl-L-methionine = 2-methylsulfanyl-N(6)-dimethylallyladenosine(37) in tRNA + (sulfur carrier)-H + 5'-deoxyadenosine + L-methionine + A + S-adenosyl-L-homocysteine + 2 H(+). Functionally, catalyzes the methylthiolation of N6-(dimethylallyl)adenosine (i(6)A), leading to the formation of 2-methylthio-N6-(dimethylallyl)adenosine (ms(2)i(6)A) at position 37 in tRNAs that read codons beginning with uridine. In Treponema pallidum (strain Nichols), this protein is tRNA-2-methylthio-N(6)-dimethylallyladenosine synthase.